The following is a 273-amino-acid chain: WIMGHMVNAIYQIDEFVNLGANSIETDVSFDDNANPEYTYHGIPCDCGRSCLKWENYNDFLKGLRSATTPGNSKYQSKLILVVFDLKTGSLYDNQASEAGKKLAKNLLKHYWNNGNNGGRAYIVLSIPDLNHYPLIKGFTDTLKQEGHPELLEKVGYDFSGNDAVGDVAKAYKKAGVSGHVWQSDGITNCLLRGLTRVKEAVANRDSGNGYINKVYYWTVDKRATTRDALDAGVDGVMTNYPDVIADVMNEAAYKNKVRLATYEDSPWVTFKK.

Histidine 5 is an active-site residue. The Mg(2+) site is built by glutamate 25 and aspartate 27. Histidine 41 serves as the catalytic Nucleophile. 2 cysteine pairs are disulfide-bonded: cysteine 45–cysteine 51 and cysteine 47–cysteine 190. Aspartate 85 is a binding site for Mg(2+).

The protein belongs to the arthropod phospholipase D family. Class II subfamily. Requires Mg(2+) as cofactor. Expressed by the venom gland.

Its subcellular location is the secreted. The catalysed reaction is an N-(acyl)-sphingosylphosphocholine = an N-(acyl)-sphingosyl-1,3-cyclic phosphate + choline. The enzyme catalyses an N-(acyl)-sphingosylphosphoethanolamine = an N-(acyl)-sphingosyl-1,3-cyclic phosphate + ethanolamine. It carries out the reaction a 1-acyl-sn-glycero-3-phosphocholine = a 1-acyl-sn-glycero-2,3-cyclic phosphate + choline. It catalyses the reaction a 1-acyl-sn-glycero-3-phosphoethanolamine = a 1-acyl-sn-glycero-2,3-cyclic phosphate + ethanolamine. Its function is as follows. Dermonecrotic toxins cleave the phosphodiester linkage between the phosphate and headgroup of certain phospholipids (sphingolipid and lysolipid substrates), forming an alcohol (often choline) and a cyclic phosphate. This toxin acts on sphingomyelin (SM). It may also act on ceramide phosphoethanolamine (CPE), lysophosphatidylcholine (LPC) and lysophosphatidylethanolamine (LPE), but not on lysophosphatidylserine (LPS), and lysophosphatidylglycerol (LPG). It acts by transphosphatidylation, releasing exclusively cyclic phosphate products as second products. Induces dermonecrosis, hemolysis, increased vascular permeability, edema, inflammatory response, and platelet aggregation. The protein is Dermonecrotic toxin LhSicTox-alphaIA2ai of Loxosceles hirsuta (Recluse spider).